Reading from the N-terminus, the 97-residue chain is Secreted RxLR effector protein BLR05 (97 aa).

Positions 1 to 21 (MGPQHLLALVVVSILVAAGNA) are cleaved as a signal peptide. Positions 32–60 (RALRPSVIADQEHAVHAIPATNFISKDED) match the RxLR-dEER motif. Residues 69 to 89 (IEIIRIAIFSLLVVGVFAIMA) traverse the membrane as a helical segment.

Belongs to the RxLR effector family. As to quaternary structure, interacts with host transcription factor NAC069.

The protein localises to the secreted. The protein resides in the host endoplasmic reticulum membrane. Secreted effector that inhibits stress-induced relocalization of the transcription factor NAC069 to the nucleus, thus affecting its broad role in abiotic and biotic stress responses. The sequence is that of Secreted RxLR effector protein BLR05 from Bremia lactucae (Lettuce downy mildew).